Here is a 68-residue protein sequence, read N- to C-terminus: MPDVRRCDFCGRIIEPGTGKMFVKNDGTILWFCSSKCERNMLKLGRDPKKVRWTEKHREFMAEQRGEL.

Zn(2+) is bound by residues Cys-7, Cys-10, Cys-33, and Cys-37. The C4-type zinc-finger motif lies at 7 to 37 (CDFCGRIIEPGTGKMFVKNDGTILWFCSSKC).

It belongs to the eukaryotic ribosomal protein eL24 family. In terms of assembly, part of the 50S ribosomal subunit. Forms a cluster with proteins L3 and L14. Zn(2+) serves as cofactor.

Its function is as follows. Binds to the 23S rRNA. This Methanopyrus kandleri (strain AV19 / DSM 6324 / JCM 9639 / NBRC 100938) protein is Large ribosomal subunit protein eL24.